The chain runs to 92 residues: Acylphosphatase (92 aa).

Residues 5–92 (RAHVFISGRV…GKEGIFTIVW (88 aa)) enclose the Acylphosphatase-like domain. Residues Arg20 and Asn38 contribute to the active site.

It belongs to the acylphosphatase family.

It carries out the reaction an acyl phosphate + H2O = a carboxylate + phosphate + H(+). The polypeptide is Acylphosphatase (acyP) (Chloroflexus aurantiacus (strain ATCC 29366 / DSM 635 / J-10-fl)).